A 212-amino-acid polypeptide reads, in one-letter code: Imidazole glycerol phosphate synthase subunit HisH 2 (212 aa).

In terms of domain architecture, Glutamine amidotransferase type-1 spans 3–212; the sequence is RVAIIDYGIN…LMSNFLQWNP (210 aa). The Nucleophile role is filled by cysteine 82. Catalysis depends on residues histidine 192 and glutamate 194.

In terms of assembly, heterodimer of HisH and HisF.

It localises to the cytoplasm. The enzyme catalyses 5-[(5-phospho-1-deoxy-D-ribulos-1-ylimino)methylamino]-1-(5-phospho-beta-D-ribosyl)imidazole-4-carboxamide + L-glutamine = D-erythro-1-(imidazol-4-yl)glycerol 3-phosphate + 5-amino-1-(5-phospho-beta-D-ribosyl)imidazole-4-carboxamide + L-glutamate + H(+). It carries out the reaction L-glutamine + H2O = L-glutamate + NH4(+). Its pathway is amino-acid biosynthesis; L-histidine biosynthesis; L-histidine from 5-phospho-alpha-D-ribose 1-diphosphate: step 5/9. In terms of biological role, IGPS catalyzes the conversion of PRFAR and glutamine to IGP, AICAR and glutamate. The HisH subunit provides the glutamine amidotransferase activity that produces the ammonia necessary to HisF for the synthesis of IGP and AICAR. The polypeptide is Imidazole glycerol phosphate synthase subunit HisH 2 (Nitrobacter winogradskyi (strain ATCC 25391 / DSM 10237 / CIP 104748 / NCIMB 11846 / Nb-255)).